Consider the following 49-residue polypeptide: uncharacterized protein (49 aa).

A helical membrane pass occupies residues Phe8–Phe28.

It is found in the cell membrane. This is an uncharacterized protein from Bacillus subtilis (strain 168).